Here is a 201-residue protein sequence, read N- to C-terminus: 3-isopropylmalate dehydratase small subunit (201 aa).

The protein belongs to the LeuD family. LeuD type 1 subfamily. In terms of assembly, heterodimer of LeuC and LeuD.

It carries out the reaction (2R,3S)-3-isopropylmalate = (2S)-2-isopropylmalate. It participates in amino-acid biosynthesis; L-leucine biosynthesis; L-leucine from 3-methyl-2-oxobutanoate: step 2/4. Catalyzes the isomerization between 2-isopropylmalate and 3-isopropylmalate, via the formation of 2-isopropylmaleate. The sequence is that of 3-isopropylmalate dehydratase small subunit from Escherichia coli O127:H6 (strain E2348/69 / EPEC).